The following is a 716-amino-acid chain: Antibacterial effector protein Tle3 (716 aa).

The tract at residues 68–87 is disordered; sequence PTLPGGQANPGYLTPAGYSL.

As to quaternary structure, interacts in the cytoplasm with the adapter protein Tla3. Interacts in the periplasm with the immunity protein Tli3.

It is found in the secreted. Its subcellular location is the host periplasm. Neutralized by the immunity protein Tli3 in the periplasm of P.aeruginosa cells. Antibacterial effector. Is toxic once delivered in the periplasm of prey bacteria. This Pseudomonas aeruginosa (strain ATCC 15692 / DSM 22644 / CIP 104116 / JCM 14847 / LMG 12228 / 1C / PRS 101 / PAO1) protein is Antibacterial effector protein Tle3.